A 1756-amino-acid chain; its full sequence is Periplakin (1756 aa).

Position 14 is a phosphoserine (S14). 2 coiled-coil regions span residues 16–125 (TVQT…KQIY) and 188–389 (KEQN…QQVV). Spectrin repeat units lie at residues 216 to 317 (QDYM…SHLK), 323 to 485 (HQFH…RTLQ), 505 to 612 (RQLL…EKVD), and 733 to 861 (EHFH…QNLE). The SH3 domain occupies 399–455 (LKPIPVEALCDFEGEQGLISRGYSYTLQKNNGESWELMDSAGNKLIAPAVCFVIPPT). S465 carries the phosphoserine modification. Coiled-coil stretches lie at residues 585-820 (LLRT…GRRS) and 886-1645 (DSGV…SVAV). Residues S887, S949, S1584, and S1657 each carry the phosphoserine modification. The segment at 1557 to 1756 (ELDFLREENH…ELAVLVSGQK (200 aa)) is interacts with BFSP2 and VIM. 2 Plectin repeats span residues 1651–1685 (ENHLRRSIVVIHPDTGRELSPEEAHRAGLIDWNMF) and 1700–1735 (VKGPNGESSVIHDRKSGKKFSIEEALQSGRLTPAQY).

Belongs to the plakin or cytolinker family. As to quaternary structure, homodimer or a heterodimer with EVPL. Found in a complex composed of PPL (via C-terminal linker domain), BFSP1 and BFSP2 in the retinal lens. Within the complex interacts (via C-terminal linker domain) with BFSP2. Interacts with VIM. Binds to the PH domain of AKT1. Interacts with FCGR1A. May interact with PPHLN1. In terms of tissue distribution, expressed in stratified squamous epithelia and in some other epithelia.

Its subcellular location is the cell junction. It is found in the desmosome. It localises to the cytoplasm. The protein localises to the cytoskeleton. The protein resides in the cell membrane. Component of the cornified envelope of keratinocytes. May link the cornified envelope to desmosomes and intermediate filaments. May act as a localization signal in PKB/AKT-mediated signaling. In Homo sapiens (Human), this protein is Periplakin (PPL).